A 617-amino-acid polypeptide reads, in one-letter code: Dopamine beta-hydroxylase (617 aa).

The Cytoplasmic segment spans residues 1–16 (MPALSRWASLPGPSMR). The helical; Signal-anchor for type II membrane protein transmembrane segment at 17 to 37 (EAAFMYSTAVAIFLVILVAAL) threads the bilayer. Residues 38 to 617 (QGSAPRESPL…TVVSIGGGKG (580 aa)) are Intragranular-facing. The DOMON domain occupies 57 to 173 (GSLELSWNVS…GTVHLVYGIL (117 aa)). A glycan (N-linked (GlcNAc...) asparagine) is linked at N64. Disulfide bonds link C154/C596, C232/C283, C269/C295, C390/C503, C394/C565, and C466/C488. N184 is a glycosylation site (N-linked (GlcNAc...) (complex) asparagine). Y230 is a catalytic residue. The Cu(2+) site is built by H262 and H263. H333 contributes to the Cu(2+) binding site. The N-linked (GlcNAc...) asparagine glycan is linked to N344. H412 is a catalytic residue. Cu(2+) contacts are provided by H412, H414, and M487. N566 is a glycosylation site (N-linked (GlcNAc...) asparagine). Residues 590–617 (EEPTPQCPTSQGRSPAGPTVVSIGGGKG) are disordered.

It belongs to the copper type II ascorbate-dependent monooxygenase family. As to quaternary structure, homotetramer; composed of two disulfide-linked dimers. Cu(2+) serves as cofactor. In terms of processing, N-glycosylated. Post-translationally, proteolytic cleavage after the membrane-anchor leads to the release of the soluble form.

It localises to the cytoplasmic vesicle. The protein resides in the secretory vesicle lumen. It is found in the secretory vesicle. Its subcellular location is the chromaffin granule lumen. The protein localises to the secreted. It localises to the secretory vesicle membrane. The protein resides in the chromaffin granule membrane. The enzyme catalyses dopamine + 2 L-ascorbate + O2 = (R)-noradrenaline + 2 monodehydro-L-ascorbate radical + H2O. It participates in catecholamine biosynthesis; (R)-noradrenaline biosynthesis; (R)-noradrenaline from dopamine: step 1/1. Its function is as follows. Catalyzes the hydroxylation of dopamine to noradrenaline (also known as norepinephrine), and is thus vital for regulation of these neurotransmitters. This is Dopamine beta-hydroxylase (DBH) from Homo sapiens (Human).